The following is a 307-amino-acid chain: Probable 2-methylisocitrate lyase 2 (307 aa).

53–55 (SGA) contributes to the substrate binding site. Residues Asp92 and Asp94 each coordinate Mg(2+). Substrate-binding positions include 129 to 130 (CG), Arg164, Glu194, 216 to 218 (NMT), Arg247, and Arg276.

It belongs to the isocitrate lyase/PEP mutase superfamily. Methylisocitrate lyase family. In terms of assembly, homotetramer; dimer of dimers. Mg(2+) serves as cofactor.

It catalyses the reaction (2S,3R)-3-hydroxybutane-1,2,3-tricarboxylate = pyruvate + succinate. Its pathway is organic acid metabolism; propanoate degradation. In terms of biological role, involved in the catabolism of short chain fatty acids (SCFA) via the 2-methylcitrate cycle I (propionate degradation route). Catalyzes the thermodynamically favored C-C bond cleavage of (2R,3S)-2-methylisocitrate to yield pyruvate and succinate via an alpha-carboxy-carbanion intermediate. In Corynebacterium glutamicum (strain ATCC 13032 / DSM 20300 / JCM 1318 / BCRC 11384 / CCUG 27702 / LMG 3730 / NBRC 12168 / NCIMB 10025 / NRRL B-2784 / 534), this protein is Probable 2-methylisocitrate lyase 2.